The sequence spans 340 residues: Ketol-acid reductoisomerase (NADP(+)) (340 aa).

A KARI N-terminal Rossmann domain is found at 1–183; the sequence is MAITVYYDKD…GGGRTGIIET (183 aa). Residues 26-29, arginine 49, serine 52, serine 54, and 84-87 contribute to the NADP(+) site; these read FGSQ and DEIQ. The active site involves histidine 109. Position 135 (glycine 135) interacts with NADP(+). In terms of domain architecture, KARI C-terminal knotted spans 184-329; it reads TFKAETETDL…RNLRAMMPWI (146 aa). Mg(2+) is bound by residues aspartate 192, glutamate 196, glutamate 228, and glutamate 232. Position 253 (serine 253) interacts with substrate.

This sequence belongs to the ketol-acid reductoisomerase family. Requires Mg(2+) as cofactor.

The enzyme catalyses (2R)-2,3-dihydroxy-3-methylbutanoate + NADP(+) = (2S)-2-acetolactate + NADPH + H(+). The catalysed reaction is (2R,3R)-2,3-dihydroxy-3-methylpentanoate + NADP(+) = (S)-2-ethyl-2-hydroxy-3-oxobutanoate + NADPH + H(+). Its pathway is amino-acid biosynthesis; L-isoleucine biosynthesis; L-isoleucine from 2-oxobutanoate: step 2/4. It functions in the pathway amino-acid biosynthesis; L-valine biosynthesis; L-valine from pyruvate: step 2/4. In terms of biological role, involved in the biosynthesis of branched-chain amino acids (BCAA). Catalyzes an alkyl-migration followed by a ketol-acid reduction of (S)-2-acetolactate (S2AL) to yield (R)-2,3-dihydroxy-isovalerate. In the isomerase reaction, S2AL is rearranged via a Mg-dependent methyl migration to produce 3-hydroxy-3-methyl-2-ketobutyrate (HMKB). In the reductase reaction, this 2-ketoacid undergoes a metal-dependent reduction by NADPH to yield (R)-2,3-dihydroxy-isovalerate. This Campylobacter jejuni subsp. doylei (strain ATCC BAA-1458 / RM4099 / 269.97) protein is Ketol-acid reductoisomerase (NADP(+)).